Here is a 367-residue protein sequence, read N- to C-terminus: Homeobox protein Nkx-6.1 (367 aa).

Residues 36-133 (YPAAYPPLPA…SSSSSSSASA (98 aa)) form a disordered region. Low complexity-rich tracts occupy residues 48–59 (PSSSSSSSSSSS), 78–91 (GGLS…QQLS), and 110–133 (ASGA…SASA). Residues 102 to 268 (LSRPSMPVAS…KYLAGPERAR (167 aa)) form a repressor domain region. Arg189 is subject to Asymmetric dimethylarginine. The segment at residues 236–295 (RKHTRPTFSGQQIFALEKTFEQTKYLAGPERARLAYSLGMTESQVKVWFQNRRTKWRKKH) is a DNA-binding region (homeobox). The tract at residues 294–367 (KHAAEMATAK…LHASEPESSS (74 aa)) is disordered. Positions 304-317 (KKQDSETERLKGAS) are enriched in basic and acidic residues. Residues 306 to 367 (QDSETERLKG…LHASEPESSS (62 aa)) form an involved in DNA-binding region.

In terms of tissue distribution, pancreatic beta cells.

The protein resides in the nucleus. Its function is as follows. Transcription factor which binds to specific A/T-rich DNA sequences in the promoter regions of a number of genes. Involved in the development of insulin-producing beta cells in the islets of Langerhans at the secondary transition. Together with NKX2-2 and IRX3 acts to restrict the generation of motor neurons to the appropriate region of the neural tube. Belongs to the class II proteins of neuronal progenitor factors, which are induced by SHH signals. The sequence is that of Homeobox protein Nkx-6.1 (NKX6-1) from Homo sapiens (Human).